The following is a 243-amino-acid chain: tRNA (guanine-N(1)-)-methyltransferase (243 aa).

S-adenosyl-L-methionine contacts are provided by residues glycine 108 and 127-132; that span reads LGDYVL.

This sequence belongs to the RNA methyltransferase TrmD family. In terms of assembly, homodimer.

It localises to the cytoplasm. It catalyses the reaction guanosine(37) in tRNA + S-adenosyl-L-methionine = N(1)-methylguanosine(37) in tRNA + S-adenosyl-L-homocysteine + H(+). Its function is as follows. Specifically methylates guanosine-37 in various tRNAs. This chain is tRNA (guanine-N(1)-)-methyltransferase, found in Streptococcus gordonii (strain Challis / ATCC 35105 / BCRC 15272 / CH1 / DL1 / V288).